The sequence spans 187 residues: Elongation factor P (187 aa).

This sequence belongs to the elongation factor P family.

Its subcellular location is the cytoplasm. It participates in protein biosynthesis; polypeptide chain elongation. In terms of biological role, involved in peptide bond synthesis. Stimulates efficient translation and peptide-bond synthesis on native or reconstituted 70S ribosomes in vitro. Probably functions indirectly by altering the affinity of the ribosome for aminoacyl-tRNA, thus increasing their reactivity as acceptors for peptidyl transferase. This is Elongation factor P from Roseiflexus castenholzii (strain DSM 13941 / HLO8).